We begin with the raw amino-acid sequence, 619 residues long: Teichoic acid poly(ribitol-phosphate) polymerase (619 aa).

Belongs to the CDP-glycerol glycerophosphotransferase family.

The protein localises to the cell membrane. It carries out the reaction 4-O-[1-D-ribitylphospho-(2R)-1-glycerylphospho]-N-acetyl-beta-D-mannosaminyl-(1-&gt;4)-N-acetyl-alpha-D-glucosaminyl di-trans,octa-cis-undecaprenyl diphosphate + n CDP-L-ribitol = 4-O-[(D-ribitylphospho)(n)-D-ribitylphospho-(2R)-glycerylphospho]-N-acetyl-beta-D-mannosaminyl-(1-&gt;4)-N-acetyl-alpha-D-glucosaminyl di-trans,octa-cis-undecaprenyl diphosphate + n CMP + n H(+). The protein operates within cell wall biogenesis; poly(ribitol phosphate) teichoic acid biosynthesis. Functionally, responsible for the polymerization of the main chain of the major teichoic acid by sequential transfer of ribitol phosphate units from CDP-ribitol to the glycerol phosphate attached to the disaccharide linkage unit. Synthesizes polymers of up to 40 ribitol phosphate units in length. The chain is Teichoic acid poly(ribitol-phosphate) polymerase (tarL) from Bacillus spizizenii (strain ATCC 23059 / NRRL B-14472 / W23) (Bacillus subtilis subsp. spizizenii).